The following is a 728-amino-acid chain: Ferric reduction oxidase 8, mitochondrial (728 aa).

Residues 1–24 constitute a mitochondrion transit peptide; that stretch reads MAKVLTLLVLRLLMNLLLIGWISL. Helical transmembrane passes span 56-74, 104-127, 194-217, 269-293, and 316-336; these read FAVF…LIYL, IGIV…WNFY, YHVW…LFIW, THHL…YWVL, and ILSA…KDPM. The Ferric oxidoreductase domain maps to 159–281; it reads FGLLAEACLS…LYIVFLVAFL (123 aa). Heme contacts are provided by His-195, His-209, His-270, and His-283. An FAD-binding FR-type domain is found at 300-418; sequence GLDKILRIVQ…EGPYGPASVD (119 aa). Residue 358–361 participates in FAD binding; the sequence is HPFS. NAD(+) is bound at residue 410 to 413; it reads GPYG. A run of 2 helical transmembrane segments spans residues 537-559 and 595-616; these read FRWL…IGLS and DLII…ATIL.

It belongs to the ferric reductase (FRE) family. It depends on FAD as a cofactor. As to expression, expressed in shoots. Detected in roots, pedicels, flowers, siliques and leaf veins.

The protein localises to the mitochondrion membrane. The enzyme catalyses 2 a Fe(II)-siderophore + NAD(+) + H(+) = 2 a Fe(III)-siderophore + NADH. Functionally, ferric chelate reductase probably involved in iron reduction in leaf veins for transport. May participate in the transport of electrons to a Fe(3+) ion via FAD and heme intermediates. This is Ferric reduction oxidase 8, mitochondrial (FRO8) from Arabidopsis thaliana (Mouse-ear cress).